Here is a 165-residue protein sequence, read N- to C-terminus: Fimbrial protein (165 aa).

Residues 1 to 21 (MRKSASAVAVLALIACGSAHA) form the signal peptide.

The protein localises to the fimbrium. In terms of biological role, structural subunit of the sef14 fimbriae. This is Fimbrial protein (sefA) from Salmonella enteritidis.